The chain runs to 53 residues: U1-poneritoxin-Dq5a (53 aa).

Residues methionine 1–asparagine 23 form the signal peptide. 3 cysteine pairs are disulfide-bonded: cysteine 25/cysteine 42, cysteine 32/cysteine 47, and cysteine 41/cysteine 52.

In terms of tissue distribution, expressed by the venom gland.

It localises to the secreted. Its function is as follows. May have neurotoxic activity. The chain is U1-poneritoxin-Dq5a from Dinoponera quadriceps (South American ant).